Reading from the N-terminus, the 394-residue chain is Choline/ethanolamine kinase (394 aa).

Ala-2 carries the post-translational modification N-acetylalanine. Residues 22–42 (GLLDAKCPEPIPNRRRSSSLS) are disordered. ATP is bound by residues 75 to 81 (SGGLSNL), Arg-104, 146 to 152 (QYLPSRP), Gln-244, and Asp-264. 77-79 (GLS) contacts substrate.

This sequence belongs to the choline/ethanolamine kinase family. In terms of assembly, homodimer, and heterodimer with CHKA.

The enzyme catalyses choline + ATP = phosphocholine + ADP + H(+). It carries out the reaction ethanolamine + ATP = phosphoethanolamine + ADP + H(+). Its pathway is phospholipid metabolism; phosphatidylethanolamine biosynthesis; phosphatidylethanolamine from ethanolamine: step 1/3. Has a key role in phospholipid metabolism, and catalyzes the first step of phosphatidylethanolamine and phosphatidylcholine biosynthesis. This Rattus norvegicus (Rat) protein is Choline/ethanolamine kinase (Chkb).